Here is a 197-residue protein sequence, read N- to C-terminus: Guanylate kinase (197 aa).

The region spanning 7–185 is the Guanylate kinase-like domain; sequence GLIIILSSPS…TLKKIHEIIV (179 aa). 14–21 contributes to the ATP binding site; it reads SPSGTGKS.

Belongs to the guanylate kinase family.

The protein resides in the cytoplasm. The enzyme catalyses GMP + ATP = GDP + ADP. Functionally, essential for recycling GMP and indirectly, cGMP. This chain is Guanylate kinase, found in Rickettsia typhi (strain ATCC VR-144 / Wilmington).